Reading from the N-terminus, the 233-residue chain is Octanoyltransferase (233 aa).

The BPL/LPL catalytic domain maps to 36 to 211 (DTTPDEIWLV…EFTRQLGYPT (176 aa)). Residues 75–82 (RGGQVTYH), 142–144 (SLG), and 155–157 (GLA) contribute to the substrate site. The active-site Acyl-thioester intermediate is the C173.

This sequence belongs to the LipB family.

Its subcellular location is the cytoplasm. The enzyme catalyses octanoyl-[ACP] + L-lysyl-[protein] = N(6)-octanoyl-L-lysyl-[protein] + holo-[ACP] + H(+). The protein operates within protein modification; protein lipoylation via endogenous pathway; protein N(6)-(lipoyl)lysine from octanoyl-[acyl-carrier-protein]: step 1/2. Its function is as follows. Catalyzes the transfer of endogenously produced octanoic acid from octanoyl-acyl-carrier-protein onto the lipoyl domains of lipoate-dependent enzymes. Lipoyl-ACP can also act as a substrate although octanoyl-ACP is likely to be the physiological substrate. The sequence is that of Octanoyltransferase from Yersinia pseudotuberculosis serotype O:3 (strain YPIII).